A 350-amino-acid polypeptide reads, in one-letter code: Histidinol-phosphate aminotransferase 1 (350 aa).

K209 bears the N6-(pyridoxal phosphate)lysine mark.

Belongs to the class-II pyridoxal-phosphate-dependent aminotransferase family. Histidinol-phosphate aminotransferase subfamily. Homodimer. The cofactor is pyridoxal 5'-phosphate.

The enzyme catalyses L-histidinol phosphate + 2-oxoglutarate = 3-(imidazol-4-yl)-2-oxopropyl phosphate + L-glutamate. It participates in amino-acid biosynthesis; L-histidine biosynthesis; L-histidine from 5-phospho-alpha-D-ribose 1-diphosphate: step 7/9. This is Histidinol-phosphate aminotransferase 1 (hisC1) from Bradyrhizobium diazoefficiens (strain JCM 10833 / BCRC 13528 / IAM 13628 / NBRC 14792 / USDA 110).